The primary structure comprises 590 residues: Beta-fructofuranosidase, insoluble isoenzyme CWINV2 (590 aa).

The signal sequence occupies residues 1–25; that stretch reads MSAPKFGYVLLLIVLINISNNGVDA. Substrate is bound by residues 59 to 62, Gln78, and Trp86; that span reads WIND. Residue Asp62 is part of the active site. Asn118 carries N-linked (GlcNAc...) asparagine glycosylation. Residue 121–122 participates in substrate binding; sequence WS. Residues Asn143 and Asn180 are each glycosylated (N-linked (GlcNAc...) asparagine). Residues 185–186, Glu241, and Asp275 contribute to the substrate site; that span reads RD. N-linked (GlcNAc...) asparagine glycosylation occurs at Asn335. A disulfide bridge connects residues Cys435 and Cys483. Asn564 carries an N-linked (GlcNAc...) asparagine glycan.

This sequence belongs to the glycosyl hydrolase 32 family. As to expression, expressed in flowers, and seeds.

It localises to the secreted. The protein resides in the extracellular space. It is found in the apoplast. The protein localises to the cell wall. The enzyme catalyses Hydrolysis of terminal non-reducing beta-D-fructofuranoside residues in beta-D-fructofuranosides.. The chain is Beta-fructofuranosidase, insoluble isoenzyme CWINV2 (CWINV2) from Arabidopsis thaliana (Mouse-ear cress).